Reading from the N-terminus, the 346-residue chain is MNNKLYGIILCFLLALPAWKLGKFFPLVGGPVFGIIIGIVIAILLKNRAKFDSGINFASKKVLQYAVILLGFGLNLQTIISVGSSSLPIIVSTISTSLIIAYILAKLINIPTKIVILIGVGSSICGGSAIAATAPVINAHDDEIAQAISVIFLFNVIAALIFPTLGDILNFSNKGFALFAGTAVNDTSSVTATASAWDSIHNTGTQVLDSATIVKLTRTLAIIPITLFLAVYNSKRSSNVNNFSLKKIFPMFIVYFILASIITTVCNYFIEVGVITENISITINNVFSFFKHLSKFFIIMAMVAIGLNTNIKKLILSGAKPLTLGFCCWFAISLVSIGLQKILGIF.

A run of 10 helical transmembrane segments spans residues 5 to 22 (LYGI…WKLG), 27 to 49 (LVGG…KNRA), 62 to 81 (VLQY…TIIS), 86 to 108 (SLPI…AKLI), 115 to 137 (VILI…APVI), 147 to 169 (AISV…GDIL), 216 to 233 (LTRT…AVYN), 248 to 270 (IFPM…NYFI), 283 to 305 (INNV…MVAI), and 315 to 337 (ILSG…LVSI).

It belongs to the UPF0324 family.

It localises to the cell membrane. The chain is UPF0324 membrane protein FN0533 from Fusobacterium nucleatum subsp. nucleatum (strain ATCC 25586 / DSM 15643 / BCRC 10681 / CIP 101130 / JCM 8532 / KCTC 2640 / LMG 13131 / VPI 4355).